A 307-amino-acid polypeptide reads, in one-letter code: Probable transposase for transposon Tn903 (307 aa).

Its function is as follows. Required for transposition of transposon Tn903. The sequence is that of Probable transposase for transposon Tn903 from Escherichia coli.